We begin with the raw amino-acid sequence, 278 residues long: Tryptophan synthase alpha chain (278 aa).

Active-site proton acceptor residues include E50 and D61.

It belongs to the TrpA family. In terms of assembly, tetramer of two alpha and two beta chains.

It catalyses the reaction (1S,2R)-1-C-(indol-3-yl)glycerol 3-phosphate + L-serine = D-glyceraldehyde 3-phosphate + L-tryptophan + H2O. It functions in the pathway amino-acid biosynthesis; L-tryptophan biosynthesis; L-tryptophan from chorismate: step 5/5. Its function is as follows. The alpha subunit is responsible for the aldol cleavage of indoleglycerol phosphate to indole and glyceraldehyde 3-phosphate. In Rhodopseudomonas palustris (strain BisB5), this protein is Tryptophan synthase alpha chain.